The sequence spans 222 residues: UPF0688 protein C1orf174 homolog (222 aa).

2 disordered regions span residues Ser-23–Lys-57 and Glu-98–Pro-158. The span at Ala-33–His-48 shows a compositional bias: polar residues. Over residues Val-121–Glu-131 the composition is skewed to basic and acidic residues. Phosphoserine is present on Ser-172.

The protein belongs to the UPF0688 family.

It is found in the nucleus. This chain is UPF0688 protein C1orf174 homolog, found in Rattus norvegicus (Rat).